The following is a 118-amino-acid chain: Large ribosomal subunit protein bL20 (118 aa).

This sequence belongs to the bacterial ribosomal protein bL20 family.

Its function is as follows. Binds directly to 23S ribosomal RNA and is necessary for the in vitro assembly process of the 50S ribosomal subunit. It is not involved in the protein synthesizing functions of that subunit. This Macrococcus caseolyticus (strain JCSC5402) (Macrococcoides caseolyticum) protein is Large ribosomal subunit protein bL20.